Here is a 100-residue protein sequence, read N- to C-terminus: Urease subunit gamma (100 aa).

It belongs to the urease gamma subunit family. As to quaternary structure, heterotrimer of UreA (gamma), UreB (beta) and UreC (alpha) subunits. Three heterotrimers associate to form the active enzyme.

The protein resides in the cytoplasm. It catalyses the reaction urea + 2 H2O + H(+) = hydrogencarbonate + 2 NH4(+). The protein operates within nitrogen metabolism; urea degradation; CO(2) and NH(3) from urea (urease route): step 1/1. The protein is Urease subunit gamma of Sinorhizobium fredii (strain NBRC 101917 / NGR234).